The primary structure comprises 243 residues: Adenosylcobinamide-GDP ribazoletransferase (243 aa).

A run of 5 helical transmembrane segments spans residues 31–48 (LLFYPLVGLLFGVLLWVL), 61–81 (AALLLTAWVLLSGGLHLDGLA), 109–129 (IAVVTLVLVLLLKFTALVALI), 134–154 (GFALLLAPLIGRGALLGLFLC), and 188–208 (LLLGGYSGLWAVLLATVLFFW).

It belongs to the CobS family. The cofactor is Mg(2+).

It localises to the cell inner membrane. The enzyme catalyses alpha-ribazole + adenosylcob(III)inamide-GDP = adenosylcob(III)alamin + GMP + H(+). It carries out the reaction alpha-ribazole 5'-phosphate + adenosylcob(III)inamide-GDP = adenosylcob(III)alamin 5'-phosphate + GMP + H(+). It participates in cofactor biosynthesis; adenosylcobalamin biosynthesis; adenosylcobalamin from cob(II)yrinate a,c-diamide: step 7/7. Functionally, joins adenosylcobinamide-GDP and alpha-ribazole to generate adenosylcobalamin (Ado-cobalamin). Also synthesizes adenosylcobalamin 5'-phosphate from adenosylcobinamide-GDP and alpha-ribazole 5'-phosphate. In Pseudomonas fluorescens (strain ATCC BAA-477 / NRRL B-23932 / Pf-5), this protein is Adenosylcobinamide-GDP ribazoletransferase.